Reading from the N-terminus, the 435-residue chain is MPNSNRAQPERTMMQAEVRIERYADQGRCVAHIDGRVVFVRFALPDELVRVELDEPHDRDDRFWTGEVVEVLEPSEDRVTPAWPLAGPLAMGGGVGGADLVHVSLPGQLKWKAITVSEQMSRLGHIDVAVPIERMPGDKAAGGLNWRTRIEMIADDNGMPSMRRRGTHNRVAIDTMPLATRTLLDVAKREHVWEGGFEPGSQIRLSVPEPRGEIVDTAAADDNYAVLVDGELRAGSQLLTEQVTINGTTFDYQVDANGFWQVHRQAPIALGTHVINLVNGQLQSAADAVIWDLYSGSGLFTLPLATMTGERTRMLSVEGARVAVKNAQRNLRAMNLNDVDARAGDVSRTLDHVPAHLAKPNVVVLDPPRAGARAKVCRQIAAAGASSVVYIACDPTSLARDTATLIGEGYELKDIRAFDIYPMTHHVETVALFTR.

4 residues coordinate S-adenosyl-L-methionine: Q261, Y294, E318, and D366. The active-site Nucleophile is C393.

Belongs to the class I-like SAM-binding methyltransferase superfamily. RNA M5U methyltransferase family.

This is an uncharacterized protein from Bifidobacterium longum (strain NCC 2705).